The sequence spans 491 residues: Cytochrome P450 monooxygenase olcB (491 aa).

The helical transmembrane segment at 5–27 (LLLSLSVCLLYVFITAFWNLYIH) threads the bilayer. Cys435 is a heme binding site.

Belongs to the cytochrome P450 family. Requires heme as cofactor.

It localises to the membrane. Its pathway is secondary metabolite biosynthesis; terpenoid biosynthesis. Cytochrome P450 monooxygenase; part of the gene cluster that mediates the biosynthesis of 15-deoxyoxalicine B. The first step of the pathway is the synthesis of nicotinyl-CoA from nicotinic acid by the nicotinic acid-CoA ligase olcI. Nicotinyl-CoA is then a substrate of polyketide synthase olcA to produce 4-hydroxy-6-(3-pyridinyl)-2H-pyran-2-one (HPPO) which is further prenylated by the polyprenyl transferase olcH to yield geranylgeranyl-HPPO. Geranylgeranyl pyrophosphate is provided by the cluster-specific geranylgeranyl pyrophosphate synthase olcC. The FAD-dependent monooxygenase olcE catalyzes the epoxidation of geranylgeranyl-HPPO and the terpene cyclase olcD catalyzes the cyclization of the terpenoid component, resulting in the formation of the tricyclic terpene moiety seen in predecaturin E. The cytochrome P450 monooxygenase then catalyzes the allylic oxidation of predecaturin E, which is followed by spirocylization with concomitant loss of one molecule of water to form decaturin E. Decaturin E is the substrate of the cytochrome P450 monooxygenase olcJ which hydroxylates it at the C-29 position to form decaturin F. The short-chain dehydrogenase/reductase olcF may catalyze the oxidation of decaturin F to generate the 29-hydroxyl-27-one intermediate, and subsequent hemiacetal formation probably leads to the formation of decaturin C. The dioxygenase olcK may be a peroxisomal enzyme that catalyzes the hydroxylation of decaturin C into decaturin A once decaturin C is shuttled into the peroxisome by the MFS transporter olcL. Finally the cytochrome P450 monooxygenase olcB catalyzes the oxidative rearrangement to yield 15-deoxyoxalicine B. In the absence of olcJ, decaturin E may be shunted to a pathway in which it is oxidized to a ketone, possibly by olcF, to form decaturin D, which undergoes further allylic oxidation to yield decaturin G. Moreover, in the absence of oclK or oclL, oclB can convert decaturin C into 15-deoxyoxalicine A. This Penicillium canescens protein is Cytochrome P450 monooxygenase olcB.